A 1187-amino-acid polypeptide reads, in one-letter code: Trafficking protein particle complex II-specific subunit 120 homolog (1187 aa).

The disordered stretch occupies residues 1037-1059; that stretch reads GTTAKTDSSKEPGDGSSRSADES.

It belongs to the TRS120 family. As to quaternary structure, part of the multisubunit TRAPP (transport protein particle) II complex composed of BET3, BET5, TRS20, TRS23, TRS31, TRS33, TRS65, TRS85, TRS120 and TRS130.

The protein localises to the golgi apparatus. It localises to the trans-Golgi network. The protein resides in the early endosome. In terms of biological role, specific subunit of the TRAPP II complex, a highly conserved vesicle tethering complex that is required for the proper transport of proteins in post-Golgi trafficking pathways to the growing cell plate in mitotic active cells. In Oryza sativa subsp. japonica (Rice), this protein is Trafficking protein particle complex II-specific subunit 120 homolog.